The primary structure comprises 449 residues: Chromosomal replication initiator protein DnaA (449 aa).

Residues 1–75 (MDTNNDIEKR…EILSQNKVGM (75 aa)) form a domain I, interacts with DnaA modulators region. The interval 75 to 106 (MHLAHSVDVRIEVASKVHVSDHSNINYKATKS) is domain II. Positions 107-321 (SIKDSYTFEN…GAIIKISVNA (215 aa)) are domain III, AAA+ region. The ATP site is built by Gly151, Gly153, Lys154, and Thr155. The domain IV, binds dsDNA stretch occupies residues 322–449 (NLMNAPIDLN…LNELNDKKQH (128 aa)).

Belongs to the DnaA family. In terms of assembly, oligomerizes as a right-handed, spiral filament on DNA at oriC.

It localises to the cytoplasm. Plays an essential role in the initiation and regulation of chromosomal replication. ATP-DnaA binds to the origin of replication (oriC) to initiate formation of the DNA replication initiation complex once per cell cycle. Binds the DnaA box (a 9 base pair repeat at the origin) and separates the double-stranded (ds)DNA. Forms a right-handed helical filament on oriC DNA; dsDNA binds to the exterior of the filament while single-stranded (ss)DNA is stabiized in the filament's interior. The ATP-DnaA-oriC complex binds and stabilizes one strand of the AT-rich DNA unwinding element (DUE), permitting loading of DNA polymerase. After initiation quickly degrades to an ADP-DnaA complex that is not apt for DNA replication. Binds acidic phospholipids. In Helicobacter acinonychis (strain Sheeba), this protein is Chromosomal replication initiator protein DnaA.